The following is a 310-amino-acid chain: Tyrosine recombinase XerC (310 aa).

The region spanning 1-92 (MDELIKEFDR…SLRAFFKYLH (92 aa)) is the Core-binding (CB) domain. Positions 113 to 300 (YIPAVLSVDE…SVNRLMAVYD (188 aa)) constitute a Tyr recombinase domain. Residues R153, K177, H252, R255, and H278 contribute to the active site. The active-site O-(3'-phospho-DNA)-tyrosine intermediate is the Y287.

This sequence belongs to the 'phage' integrase family. XerC subfamily. In terms of assembly, forms a cyclic heterotetrameric complex composed of two molecules of XerC and two molecules of XerD.

The protein resides in the cytoplasm. In terms of biological role, site-specific tyrosine recombinase, which acts by catalyzing the cutting and rejoining of the recombining DNA molecules. The XerC-XerD complex is essential to convert dimers of the bacterial chromosome into monomers to permit their segregation at cell division. It also contributes to the segregational stability of plasmids. This Syntrophus aciditrophicus (strain SB) protein is Tyrosine recombinase XerC.